Here is a 1033-residue protein sequence, read N- to C-terminus: Phospholipid-transporting ATPase neo1 (1033 aa).

4 consecutive transmembrane segments (helical) span residues 133-153, 274-294, 317-337, and 344-364; these read LKIG…LITL, TLWA…VYTG, INFY…GLTF, and DWYI…PINL. The 4-aspartylphosphate intermediate role is filled by aspartate 408. Positions 408, 409, 410, 491, 528, 530, 533, 551, 580, 581, 662, 663, 664, 744, and 750 each coordinate ATP. Position 408 (aspartate 408) interacts with Mg(2+). Threonine 410 contacts Mg(2+). The next 6 helical transmembrane spans lie at 768 to 788, 843 to 863, 913 to 933, 939 to 959, 965 to 985, and 992 to 1012; these read IGDG…IGIV, VVYS…LLLV, VLIS…LIGF, MLAV…ALQI, TIVM…PFLT, and FLLG…SLLP. Position 770 (aspartate 770) interacts with Mg(2+). Residues asparagine 773 and aspartate 774 each coordinate ATP. Aspartate 774 lines the Mg(2+) pocket.

This sequence belongs to the cation transport ATPase (P-type) (TC 3.A.3) family. Type IV subfamily. In terms of assembly, functions without a CDC50/LEM3 family accessory subunit. Requires Mg(2+) as cofactor.

The protein resides in the endosome membrane. Its subcellular location is the golgi apparatus membrane. The enzyme catalyses ATP + H2O + phospholipidSide 1 = ADP + phosphate + phospholipidSide 2.. It carries out the reaction a 1,2-diacyl-sn-glycero-3-phospho-L-serine(out) + ATP + H2O = a 1,2-diacyl-sn-glycero-3-phospho-L-serine(in) + ADP + phosphate + H(+). The catalysed reaction is a 1,2-diacyl-sn-glycero-3-phosphoethanolamine(out) + ATP + H2O = a 1,2-diacyl-sn-glycero-3-phosphoethanolamine(in) + ADP + phosphate + H(+). In terms of biological role, flippase that catalyzes the hydrolysis of ATP coupled to the transport of lysophosphatidylserine, phosphatidylethanolamine, and phosphatidylserine from the lumenal to the cytosolic leaflet of the Golgi apparatus membrane and ensures the maintenance of asymmetric distribution of phospholipids. This chain is Phospholipid-transporting ATPase neo1, found in Schizosaccharomyces pombe (strain 972 / ATCC 24843) (Fission yeast).